The sequence spans 352 residues: Thiosulfate transporter TsuA (352 aa).

Residues 1-21 (MFSMILSGLICGALLGFVMQR) traverse the membrane as a helical segment. The Cytoplasmic portion of the chain corresponds to 22-44 (GRFCLTGGFRDMYIVKNNRMFYA). A helical membrane pass occupies residues 45–65 (LLIAISVQSVGVFALIQAGLL). Residues 66–70 (TYEAG) lie on the Periplasmic side of the membrane. Residues 71–91 (AFPWLGTVIGGYIFGLGIVLA) traverse the membrane as a helical segment. Residues 92–102 (GGCATGTWYRA) lie on the Cytoplasmic side of the membrane. Residues 103–123 (GEGLIGSWIALFTYMVMSAVM) form a helical membrane-spanning segment. Topologically, residues 124 to 148 (RSPHASGLNQTLQHYSTEHNSIAET) are periplasmic. Residues 149–169 (FNLSVWPLVAVLLVITLWVVM) form a helical membrane-spanning segment. Residues 170–197 (KELKKPKLKVATLPPRRTGIAHILFEKR) are Cytoplasmic-facing. The chain crosses the membrane as a helical span at residues 198–218 (WHPFVTAVLIGLIALLAWPLS). Over 219–247 (EATGRMFGLGITSPTANILQFLVAGDMKY) the chain is Periplasmic. Residues 248–268 (INWGVFLVLGIFVGSFIAAKA) traverse the membrane as a helical segment. The Cytoplasmic portion of the chain corresponds to 269-289 (SREFRVRAADAQTTLRSGLGG). The helical transmembrane segment at 290–310 (VLMGFGASIAGGCSIGNGLVM) threads the bilayer. Residues 311–317 (TAMMTWQ) are Periplasmic-facing. A helical transmembrane segment spans residues 318–338 (GWIGLVFMILGVWTASWLVYV). Topologically, residues 339 to 352 (RPQRKARLATAAAN) are cytoplasmic.

The protein belongs to the TsuA/YedE (TC 9.B.102) family.

The protein resides in the cell inner membrane. It carries out the reaction thiosulfate(in) = thiosulfate(out). In terms of biological role, mediates thiosulfate uptake. This is Thiosulfate transporter TsuA from Escherichia coli (strain K12).